We begin with the raw amino-acid sequence, 805 residues long: Ubiquitin carboxyl-terminal hydrolase 10-B (805 aa).

2 disordered regions span residues Ala136–Gly173 and Asp284–Val305. 2 stretches are compositionally biased toward polar residues: residues Asn143–Gly153 and Asp284–Glu298. The region spanning Arg422 to Val802 is the USP domain. The Nucleophile role is filled by Cys431. The tract at residues Glu573 to Arg600 is disordered. His756 serves as the catalytic Proton acceptor.

It belongs to the peptidase C19 family. USP10 subfamily.

Its subcellular location is the cytoplasm. It localises to the nucleus. It catalyses the reaction Thiol-dependent hydrolysis of ester, thioester, amide, peptide and isopeptide bonds formed by the C-terminal Gly of ubiquitin (a 76-residue protein attached to proteins as an intracellular targeting signal).. Its function is as follows. Hydrolase that can remove conjugated ubiquitin from target proteins such as p53/tp53, rps2/us5, rps3/us3, rps10/eS10, becn1, snx3 and cftr. Acts as an essential regulator of p53/tp53 stability: in unstressed cells, specifically deubiquitinates p53/tp53 in the cytoplasm, leading to counteracts MDM2 action and stabilize p53/tp53. Following DNA damage, translocates to the nucleus and deubiquitinates p53/tp53, leading to regulate the p53/TP53-dependent DNA damage response. Component of a regulatory loop that controls autophagy and p53/tp53 levels. Plays a key role in 40S ribosome subunit recycling when a ribosome has stalled during translation: acts both by inhibiting formation of stress granules, which store stalled translation pre-initiation complexes, and mediating deubiquitination of 40S ribosome subunits. Deubiquitinates cftr in early endosomes, enhancing its endocytic recycling. This is Ubiquitin carboxyl-terminal hydrolase 10-B (usp10-b) from Xenopus laevis (African clawed frog).